A 1241-amino-acid polypeptide reads, in one-letter code: ATP-dependent helicase/nuclease subunit A (1241 aa).

Positions 12 to 485 (SQWTDDQWKA…IDLAKNFRSR (474 aa)) constitute a UvrD-like helicase ATP-binding domain. 33–40 (AAAGSGKT) is a binding site for ATP. The UvrD-like helicase C-terminal domain occupies 505–805 (GEIDYDADAE…RIMTIHKSKG (301 aa)).

The protein belongs to the helicase family. AddA subfamily. In terms of assembly, heterodimer of AddA and AddB/RexB. Mg(2+) is required as a cofactor.

It catalyses the reaction Couples ATP hydrolysis with the unwinding of duplex DNA by translocating in the 3'-5' direction.. The catalysed reaction is ATP + H2O = ADP + phosphate + H(+). Functionally, the heterodimer acts as both an ATP-dependent DNA helicase and an ATP-dependent, dual-direction single-stranded exonuclease. Recognizes the chi site generating a DNA molecule suitable for the initiation of homologous recombination. The AddA nuclease domain is required for chi fragment generation; this subunit has the helicase and 3' -&gt; 5' nuclease activities. The chain is ATP-dependent helicase/nuclease subunit A from Bacillus cereus (strain ZK / E33L).